The chain runs to 194 residues: MASRTVLLPSAVLILRLLSLGLLAASLALIAADKLNVDSDPPQRYTFRDVYAYRYVLAVAVIGCAYTLLQLPLAAVSIIASGNNKRGIGAGGGSVAVALLVLVLLADVVFALLLATGAAAGFAFTYDVKRYLDGQFDDDSIGTPEVDKLHRDMDKFFDLAYAAAGLMLAAAACMALVIMLSVYSLARQVRSDYI.

Residues 1 to 10 are Cytoplasmic-facing; it reads MASRTVLLPS. Residues 11–31 form a helical membrane-spanning segment; it reads AVLILRLLSLGLLAASLALIA. Topologically, residues 32–55 are extracellular; sequence ADKLNVDSDPPQRYTFRDVYAYRY. Residues 56-76 traverse the membrane as a helical segment; that stretch reads VLAVAVIGCAYTLLQLPLAAV. Topologically, residues 77–94 are cytoplasmic; sequence SIIASGNNKRGIGAGGGS. Residues 95–115 form a helical membrane-spanning segment; it reads VAVALLVLVLLADVVFALLLA. Residues 116-161 lie on the Extracellular side of the membrane; the sequence is TGAAAGFAFTYDVKRYLDGQFDDDSIGTPEVDKLHRDMDKFFDLAY. A helical membrane pass occupies residues 162–182; that stretch reads AAAGLMLAAAACMALVIMLSV. The Cytoplasmic segment spans residues 183-194; sequence YSLARQVRSDYI.

Belongs to the Casparian strip membrane proteins (CASP) family. Homodimer and heterodimers.

It is found in the cell membrane. This chain is CASP-like protein 4D1, found in Sorghum bicolor (Sorghum).